The sequence spans 162 residues: Caveolin-2 (162 aa).

Residues 1 to 86 (MGLETEKADV…FEISKYVIYK (86 aa)) are Cytoplasmic-facing. Tyrosine 19 carries the post-translational modification Phosphotyrosine; by SRC. Phosphoserine occurs at positions 20 and 23. A Phosphotyrosine; by SRC modification is found at tyrosine 27. A Phosphoserine modification is found at serine 36. An intramembrane region (helical) is located at residues 87 to 107 (FLTLFLAIPLAFAAGILFATL). Residues 108-162 (SCLHIWIIMPFVKTCLMVLPSVQTIWKSITDVVIAPLCTSVGRSFSSVSLQLSHD) are Cytoplasmic-facing.

Belongs to the caveolin family. As to quaternary structure, monomer or homodimer. Interacts with CAV1; the interaction forms a stable heterooligomeric complex that is required for targeting to lipid rafts and for caveolae formation. Tyrosine phosphorylated forms do not form heterooligomers with the Tyr-19-phosphorylated form existing as a monomer or dimer, and the Tyr-27-form as a monomer only. Interacts (tyrosine phosphorylated form) with the SH2 domain-containing proteins, RASA1, NCK1 and SRC. Interacts (tyrosine phosphorylated form) with INSR, the interaction (Tyr-27-phosphorylated form) is increased on insulin stimulation. Interacts (Tyr-19 phosphorylated form) with MAPK1 (phosphorylated form); the interaction, promoted by insulin, leads to nuclear location and MAPK1 activation. Interacts with STAT3; the interaction is increased on insulin-induced tyrosine phosphorylation leading to STAT activation. Post-translationally, phosphorylated on serine and tyrosine residues. CAV1 promotes phosphorylation on Ser-23 which then targets the complex to the plasma membrane, lipid rafts and caveolae. Phosphorylation on Ser-36 appears to modulate mitosis in endothelial cells. Phosphorylation on both Tyr-19 and Tyr-27 is required for insulin-induced 'Ser-727' phosphorylation of STAT3 and its activation. Phosphorylation on Tyr-19 is required for insulin-induced phosphorylation of MAPK1 and DNA binding of STAT3. Tyrosine phosphorylation is induced by both EGF and insulin (By. similarity).

It localises to the nucleus. The protein resides in the cytoplasm. The protein localises to the golgi apparatus membrane. It is found in the cell membrane. Its subcellular location is the membrane. It localises to the caveola. In terms of biological role, may act as a scaffolding protein within caveolar membranes. Interacts directly with G-protein alpha subunits and can functionally regulate their activity. Acts as an accessory protein in conjunction with CAV1 in targeting to lipid rafts and driving caveolae formation. The Ser-36 phosphorylated form has a role in modulating mitosis in endothelial cells. Positive regulator of cellular mitogenesis of the MAPK signaling pathway. Required for the insulin-stimulated nuclear translocation and activation of MAPK1 and STAT3, and the subsequent regulation of cell cycle progression. This is Caveolin-2 (CAV2) from Neofelis nebulosa (Clouded leopard).